Consider the following 499-residue polypeptide: Glycerol kinase (499 aa).

Threonine 13 lines the ADP pocket. Threonine 13, threonine 14, and serine 15 together coordinate ATP. Threonine 13 is a binding site for sn-glycerol 3-phosphate. ADP is bound at residue arginine 17. Arginine 83, glutamate 84, tyrosine 135, and aspartate 245 together coordinate sn-glycerol 3-phosphate. Positions 83, 84, 135, 245, and 246 each coordinate glycerol. Threonine 267 and glycine 310 together coordinate ADP. ATP-binding residues include threonine 267, glycine 310, glutamine 314, and alanine 411. Residues alanine 411 and asparagine 415 each contribute to the ADP site.

This sequence belongs to the FGGY kinase family.

The catalysed reaction is glycerol + ATP = sn-glycerol 3-phosphate + ADP + H(+). It functions in the pathway polyol metabolism; glycerol degradation via glycerol kinase pathway; sn-glycerol 3-phosphate from glycerol: step 1/1. Inhibited by fructose 1,6-bisphosphate (FBP). In terms of biological role, key enzyme in the regulation of glycerol uptake and metabolism. Catalyzes the phosphorylation of glycerol to yield sn-glycerol 3-phosphate. The protein is Glycerol kinase of Xylella fastidiosa (strain M23).